We begin with the raw amino-acid sequence, 434 residues long: Putative ankyrin repeat protein FPV219 (434 aa).

ANK repeat units follow at residues aspartate 33–leucine 62, glutamate 66–cysteine 95, histidine 101–tyrosine 131, threonine 132–threonine 161, leucine 165–serine 195, leucine 196–alanine 225, and glutamate 229–isoleucine 258.

This chain is Putative ankyrin repeat protein FPV219, found in Fowlpox virus (strain NVSL) (FPV).